Consider the following 620-residue polypeptide: Chaperone protein HscA homolog (620 aa).

Belongs to the heat shock protein 70 family.

In terms of biological role, chaperone involved in the maturation of iron-sulfur cluster-containing proteins. Has a low intrinsic ATPase activity which is markedly stimulated by HscB. The protein is Chaperone protein HscA homolog of Shewanella sp. (strain MR-7).